Consider the following 198-residue polypeptide: Dephospho-CoA kinase (198 aa).

The DPCK domain maps to 3–198; sequence IVGITGGIGS…LLAKERLELA (196 aa). ATP is bound at residue 11–16; sequence GSGKTT.

It belongs to the CoaE family.

The protein localises to the cytoplasm. It catalyses the reaction 3'-dephospho-CoA + ATP = ADP + CoA + H(+). It participates in cofactor biosynthesis; coenzyme A biosynthesis; CoA from (R)-pantothenate: step 5/5. Catalyzes the phosphorylation of the 3'-hydroxyl group of dephosphocoenzyme A to form coenzyme A. The chain is Dephospho-CoA kinase from Dehalococcoides mccartyi (strain ATCC BAA-2266 / KCTC 15142 / 195) (Dehalococcoides ethenogenes (strain 195)).